We begin with the raw amino-acid sequence, 227 residues long: Cytochrome c oxidase subunit 2 (227 aa).

Over Met1–Ser14 the chain is Mitochondrial intermembrane. The chain crosses the membrane as a helical span at residues Pro15–Thr45. Over Leu46–Gln59 the chain is Mitochondrial matrix. A helical membrane pass occupies residues Glu60 to Thr87. The Mitochondrial intermembrane portion of the chain corresponds to Asp88–Leu227. Cu cation-binding residues include His161, Cys196, Glu198, Cys200, His204, and Met207. Glu198 lines the Mg(2+) pocket.

The protein belongs to the cytochrome c oxidase subunit 2 family. Component of the cytochrome c oxidase (complex IV, CIV), a multisubunit enzyme composed of 14 subunits. The complex is composed of a catalytic core of 3 subunits MT-CO1, MT-CO2 and MT-CO3, encoded in the mitochondrial DNA, and 11 supernumerary subunits COX4I, COX5A, COX5B, COX6A, COX6B, COX6C, COX7A, COX7B, COX7C, COX8 and NDUFA4, which are encoded in the nuclear genome. The complex exists as a monomer or a dimer and forms supercomplexes (SCs) in the inner mitochondrial membrane with NADH-ubiquinone oxidoreductase (complex I, CI) and ubiquinol-cytochrome c oxidoreductase (cytochrome b-c1 complex, complex III, CIII), resulting in different assemblies (supercomplex SCI(1)III(2)IV(1) and megacomplex MCI(2)III(2)IV(2)). Found in a complex with TMEM177, COA6, COX18, COX20, SCO1 and SCO2. Interacts with TMEM177 in a COX20-dependent manner. Interacts with COX20. Interacts with COX16. Cu cation is required as a cofactor.

Its subcellular location is the mitochondrion inner membrane. It catalyses the reaction 4 Fe(II)-[cytochrome c] + O2 + 8 H(+)(in) = 4 Fe(III)-[cytochrome c] + 2 H2O + 4 H(+)(out). Functionally, component of the cytochrome c oxidase, the last enzyme in the mitochondrial electron transport chain which drives oxidative phosphorylation. The respiratory chain contains 3 multisubunit complexes succinate dehydrogenase (complex II, CII), ubiquinol-cytochrome c oxidoreductase (cytochrome b-c1 complex, complex III, CIII) and cytochrome c oxidase (complex IV, CIV), that cooperate to transfer electrons derived from NADH and succinate to molecular oxygen, creating an electrochemical gradient over the inner membrane that drives transmembrane transport and the ATP synthase. Cytochrome c oxidase is the component of the respiratory chain that catalyzes the reduction of oxygen to water. Electrons originating from reduced cytochrome c in the intermembrane space (IMS) are transferred via the dinuclear copper A center (CU(A)) of subunit 2 and heme A of subunit 1 to the active site in subunit 1, a binuclear center (BNC) formed by heme A3 and copper B (CU(B)). The BNC reduces molecular oxygen to 2 water molecules using 4 electrons from cytochrome c in the IMS and 4 protons from the mitochondrial matrix. This chain is Cytochrome c oxidase subunit 2 (MT-CO2), found in Hylobates lar (Lar gibbon).